The primary structure comprises 371 residues: Putative glutamate--cysteine ligase 2 (371 aa).

It belongs to the glutamate--cysteine ligase type 2 family. YbdK subfamily.

It catalyses the reaction L-cysteine + L-glutamate + ATP = gamma-L-glutamyl-L-cysteine + ADP + phosphate + H(+). Its function is as follows. ATP-dependent carboxylate-amine ligase which exhibits weak glutamate--cysteine ligase activity. The sequence is that of Putative glutamate--cysteine ligase 2 from Burkholderia ambifaria (strain MC40-6).